Consider the following 307-residue polypeptide: Ornithine carbamoyltransferase (307 aa).

Carbamoyl phosphate is bound by residues 54 to 57 (STRT), Gln81, Arg105, and 132 to 135 (HPCQ). L-ornithine contacts are provided by residues Asn163, Asp221, and 225–226 (SM). Residues 261 to 262 (CL) and Arg289 each bind carbamoyl phosphate.

It belongs to the aspartate/ornithine carbamoyltransferase superfamily. OTCase family.

Its subcellular location is the cytoplasm. It catalyses the reaction carbamoyl phosphate + L-ornithine = L-citrulline + phosphate + H(+). Its pathway is amino-acid biosynthesis; L-arginine biosynthesis; L-arginine from L-ornithine and carbamoyl phosphate: step 1/3. Functionally, reversibly catalyzes the transfer of the carbamoyl group from carbamoyl phosphate (CP) to the N(epsilon) atom of ornithine (ORN) to produce L-citrulline. This is Ornithine carbamoyltransferase from Chromobacterium violaceum (strain ATCC 12472 / DSM 30191 / JCM 1249 / CCUG 213 / NBRC 12614 / NCIMB 9131 / NCTC 9757 / MK).